The primary structure comprises 275 residues: Fos-related antigen 1 (275 aa).

Disordered stretches follow at residues 1–33 and 71–115; these read MYRDFGEPGPSSGAGSAYGRPAQPQQAQTQTVQ and TYPQ…VRRE. The segment covering 7–33 has biased composition (low complexity); it reads EPGPSSGAGSAYGRPAQPQQAQTQTVQ. Residues 107–170 form the bZIP domain; sequence EERRRVRRER…ERLELVLEAH (64 aa). The tract at residues 109–129 is basic motif; it reads RRRVRRERNKLAAAKCRNRRK. Residues 135–163 are leucine-zipper; sequence LQAETDKLEDEKSGLQREIEELQKQKERL. Residues 171–184 are compositionally biased toward basic and acidic residues; it reads RPICKIPEEDKKDT. The segment at 171–275 is disordered; that stretch reads RPICKIPEED…PLGSPTLLAL (105 aa). Low complexity-rich tracts occupy residues 185–194, 219–237, and 256–275; these read GGTSSTSGAG, LHTPTLMTTPSLTPFTPSL, and SSSSGDPSSDPLGSPTLLAL. S269 is modified (phosphoserine).

This sequence belongs to the bZIP family. Fos subfamily. As to quaternary structure, heterodimer. Interacts with the BAF multiprotein chromatin-remodeling complex subunits SMARCB1 and SMARCD1. Interacts with ARID1A and JUN.

Its subcellular location is the nucleus. This is Fos-related antigen 1 (Fosl1) from Rattus norvegicus (Rat).